The following is a 59-amino-acid chain: Putative potassium channel toxin Ts22 (59 aa).

Residues 1–22 (MKAFYGILIIFILISMIDLSQQ) form the signal peptide. 3 cysteine pairs are disulfide-bonded: cysteine 29/cysteine 50, cysteine 35/cysteine 55, and cysteine 39/cysteine 57.

The protein belongs to the short scorpion toxin superfamily. Potassium channel inhibitor family. Alpha-KTx 04 subfamily. As to expression, expressed by the venom gland.

It localises to the secreted. In terms of biological role, potently blocks voltage-gated potassium channels (Kv). This chain is Putative potassium channel toxin Ts22, found in Tityus serrulatus (Brazilian scorpion).